The chain runs to 611 residues: Elongation factor 4 (611 aa).

The 182-residue stretch at 12-193 folds into the tr-type G domain; that stretch reads AVIRNFCIIA…TIVAKVPAPE (182 aa). GTP-binding positions include 24–29 and 140–143; these read DHGKST and NKID.

Belongs to the TRAFAC class translation factor GTPase superfamily. Classic translation factor GTPase family. LepA subfamily.

It localises to the cell membrane. The catalysed reaction is GTP + H2O = GDP + phosphate + H(+). Required for accurate and efficient protein synthesis under certain stress conditions. May act as a fidelity factor of the translation reaction, by catalyzing a one-codon backward translocation of tRNAs on improperly translocated ribosomes. Back-translocation proceeds from a post-translocation (POST) complex to a pre-translocation (PRE) complex, thus giving elongation factor G a second chance to translocate the tRNAs correctly. Binds to ribosomes in a GTP-dependent manner. The chain is Elongation factor 4 from Cutibacterium acnes (strain DSM 16379 / KPA171202) (Propionibacterium acnes).